Reading from the N-terminus, the 600-residue chain is MTAEDSASAVAMSNPSPSSSSKSSSGHPQHHCTVPEGVAGAPNEAALVSLMERSGYGMVQENGQRKYGPPPGWQGTSPPRGCEIFVGKIPRDVYEDELVPVFESVGRIYEMRLMMDFDGKNRGYAFVMYTQKHEAKRAVRELNNFEIRPGRLLGVCSSVDNCRLFIGGIPKTKKREEILEEVSKVTEGVLDVIVYASAADKMKNRGFAFVEYESHRAAAMARRKLMPGRIQLWGHQIAVDWAEPEIDVDEDVMETVKILYVRNLMIETSEEILRQTFGQFNPGCVERVKKIRDYAFVHFASRDDAVVAMDNLNGTEIEGSRIEVTLAKPVDKEQYTRYQKASKGTAAATTVESTQQSYVYQCDPYTLAYYGYPYNTLIGPNRDYFIKGTVRGRGRAGASSRGPGPRGSYLGGYSAGRGIYSRYHEGKTKLPDKPYEIMSNLELAAVNPVGIKPGTMALPALGAQYPTVFSAAPATKLMEEGKIHPVEHLINPLALQHDPTAASATAAVIPAVSTPPPFQGRPITPVYAMAHNIQRIPAAAASLYGAGYMPIAAHANTATLAALQKNAAVAAAYGGYAGYMPQAFPAATFQMPIHDVYQTY.

Low complexity predominate over residues methionine 1–serine 25. Residues methionine 1–glycine 37 form a disordered region. RRM domains lie at cysteine 82 to aspartate 160, cysteine 162 to proline 244, and lysine 257 to proline 329.

Belongs to the RRM RBM47 family. In terms of assembly, homodimer. May interact with MAVS; may regulate MAVS lysosomal degradation.

The protein resides in the nucleus. Its subcellular location is the cytoplasm. Functionally, single-stranded RNA-binding protein that functions in a variety of RNA processes, including alternative splicing, RNA stabilization, and RNA editing. Independently of its RNA-binding activity, could negatively regulate MAVS by promoting its lysosomal degradation. The protein is RNA-binding protein 47 (rbm47) of Danio rerio (Zebrafish).